An 870-amino-acid polypeptide reads, in one-letter code: DNA mismatch repair protein MutS (870 aa).

608-615 is an ATP binding site; it reads GPNMAGKS.

The protein belongs to the DNA mismatch repair MutS family.

Functionally, this protein is involved in the repair of mismatches in DNA. It is possible that it carries out the mismatch recognition step. This protein has a weak ATPase activity. The chain is DNA mismatch repair protein MutS from Persephonella marina (strain DSM 14350 / EX-H1).